A 346-amino-acid polypeptide reads, in one-letter code: MQPIRYRTDLTPYNTFGLRAQARAFIALEHADGLRDIVRLPEFNRDTVLWLGGGSNILLMEDYAGLVVHMENKGIREIARSDGMVLIEAQAGEIWHDFVLHAVALGLNGLENLSLIPGTVGASPVQNIGAYGVEAKDVIHSVRCFDLDTETFVTLSNADCRFAYRESLFKQEGKGRYVIVSVVFALKTHFVPNLGYGDLAAAVAELSAGRVPTAKDVSDAVCAIRNSKLPNPNVLGNVGSFFKNPVVSAEKAATLLQRHPDMPRYPQPDGSVKLAAGWLIDQCRLKGFQIGGAAVHDRQALVLVNKNNASANDVRQLAQHIKFTVFARFQVELHAEPNWLPASFSL.

The 172-residue stretch at 18-189 folds into the FAD-binding PCMH-type domain; the sequence is LRAQARAFIA…VSVVFALKTH (172 aa). The active site involves R165. Residue S240 is the Proton donor of the active site. E336 is an active-site residue.

It belongs to the MurB family. FAD serves as cofactor.

The protein resides in the cytoplasm. It catalyses the reaction UDP-N-acetyl-alpha-D-muramate + NADP(+) = UDP-N-acetyl-3-O-(1-carboxyvinyl)-alpha-D-glucosamine + NADPH + H(+). It participates in cell wall biogenesis; peptidoglycan biosynthesis. Functionally, cell wall formation. In Neisseria meningitidis serogroup A / serotype 4A (strain DSM 15465 / Z2491), this protein is UDP-N-acetylenolpyruvoylglucosamine reductase.